A 337-amino-acid polypeptide reads, in one-letter code: Tetraacyldisaccharide 4'-kinase (337 aa).

55–62 (TIGGNGKT) is an ATP binding site.

The protein belongs to the LpxK family.

It carries out the reaction a lipid A disaccharide + ATP = a lipid IVA + ADP + H(+). It participates in glycolipid biosynthesis; lipid IV(A) biosynthesis; lipid IV(A) from (3R)-3-hydroxytetradecanoyl-[acyl-carrier-protein] and UDP-N-acetyl-alpha-D-glucosamine: step 6/6. In terms of biological role, transfers the gamma-phosphate of ATP to the 4'-position of a tetraacyldisaccharide 1-phosphate intermediate (termed DS-1-P) to form tetraacyldisaccharide 1,4'-bis-phosphate (lipid IVA). This chain is Tetraacyldisaccharide 4'-kinase, found in Blochmanniella pennsylvanica (strain BPEN).